The primary structure comprises 263 residues: 3-methyl-2-oxobutanoate hydroxymethyltransferase (263 aa).

Mg(2+)-binding residues include aspartate 45 and aspartate 84. Residues 45–46 (DS), aspartate 84, and lysine 112 contribute to the 3-methyl-2-oxobutanoate site. Glutamate 114 provides a ligand contact to Mg(2+). The Proton acceptor role is filled by glutamate 180.

The protein belongs to the PanB family. As to quaternary structure, homodecamer; pentamer of dimers. It depends on Mg(2+) as a cofactor.

Its subcellular location is the cytoplasm. It carries out the reaction 3-methyl-2-oxobutanoate + (6R)-5,10-methylene-5,6,7,8-tetrahydrofolate + H2O = 2-dehydropantoate + (6S)-5,6,7,8-tetrahydrofolate. It functions in the pathway cofactor biosynthesis; (R)-pantothenate biosynthesis; (R)-pantoate from 3-methyl-2-oxobutanoate: step 1/2. Catalyzes the reversible reaction in which hydroxymethyl group from 5,10-methylenetetrahydrofolate is transferred onto alpha-ketoisovalerate to form ketopantoate. The sequence is that of 3-methyl-2-oxobutanoate hydroxymethyltransferase from Salmonella arizonae (strain ATCC BAA-731 / CDC346-86 / RSK2980).